The chain runs to 100 residues: Urease subunit gamma (100 aa).

The protein belongs to the urease gamma subunit family. Heterotrimer of UreA (gamma), UreB (beta) and UreC (alpha) subunits. Three heterotrimers associate to form the active enzyme.

Its subcellular location is the cytoplasm. The enzyme catalyses urea + 2 H2O + H(+) = hydrogencarbonate + 2 NH4(+). Its pathway is nitrogen metabolism; urea degradation; CO(2) and NH(3) from urea (urease route): step 1/1. The chain is Urease subunit gamma from Nocardia farcinica (strain IFM 10152).